The following is a 604-amino-acid chain: Testis-expressed protein 13C-1 (604 aa).

4 disordered regions span residues 314 to 337 (EGEGPEKPQGTSLHGDSSNNSHKD), 374 to 397 (PVMPKGISSQGNKTSSTKKKRPKI), 485 to 523 (CLNAGVSPNEKKMPQGTGKNQSQRQKEEPNSFQANHPRK), and 538 to 580 (ATKQ…SANC). Positions 322-333 (QGTSLHGDSSNN) are enriched in polar residues. Basic and acidic residues predominate over residues 544 to 572 (KQPEGIKSLESKQPQETKSSESKQQEKPL).

This sequence belongs to the TEX13 family.

Plays a role in transcriptional repression. The sequence is that of Testis-expressed protein 13C-1 from Mus musculus (Mouse).